The chain runs to 190 residues: Vespryn-21 (190 aa).

An N-terminal signal peptide occupies residues 1 to 20 (MLLFTLCFFADLENGGKALA). One can recognise a B30.2/SPRY domain in the interval 21–127 (SPPGKWQKAD…LIWQRGLWFL (107 aa)). The propeptide occupies 128-190 (QRLETDSDKL…LGGGVSLTNL (63 aa)).

The protein belongs to the ohanin/vespryn family. Expressed by the venom gland.

Its subcellular location is the secreted. Functionally, neurotoxin that produces dose-dependent hypolocomotion and hyperalgesia in mice. May directly act on the central nervous system, as it is 6500-fold more potent when administered intracerebroventricularly than intraperitoneal. In Drysdalia coronoides (White-lipped snake), this protein is Vespryn-21.